A 591-amino-acid polypeptide reads, in one-letter code: Beta-fructofuranosidase, insoluble isoenzyme CWINV4 (591 aa).

Residues 1–22 form the signal peptide; sequence MAISNVISVLLLLLVLINLSNQ. Substrate-binding positions include 61–64, Q80, W88, and 123–124; these read WIND and WS. The active site involves D64. N-linked (GlcNAc...) asparagine glycosylation is found at N145 and N182. Residues 187–188, E242, and D276 contribute to the substrate site; that span reads RD. Residues N336, N472, and N565 are each glycosylated (N-linked (GlcNAc...) asparagine). An intrachain disulfide couples C436 to C484.

This sequence belongs to the glycosyl hydrolase 32 family. As to expression, expressed in flowers, and seeds, and, to a lower extent, in seedlings.

Its subcellular location is the secreted. The protein localises to the extracellular space. It is found in the apoplast. The protein resides in the cell wall. It catalyses the reaction Hydrolysis of terminal non-reducing beta-D-fructofuranoside residues in beta-D-fructofuranosides.. This is Beta-fructofuranosidase, insoluble isoenzyme CWINV4 (CWINV4) from Arabidopsis thaliana (Mouse-ear cress).